The primary structure comprises 585 residues: Putative phospholipase B-like 2 (585 aa).

A signal peptide spans 1–35 (MAAPMDRTHGGRAARALRRALALASLAGLLLSGLA). Residues N84, N102, and N106 are each glycosylated (N-linked (GlcNAc...) asparagine). C138 and C148 are disulfide-bonded. Residues N227 and N432 are each glycosylated (N-linked (GlcNAc...) asparagine). C488 and C491 are oxidised to a cystine. A glycan (N-linked (GlcNAc...) asparagine) is linked at N511.

The protein belongs to the phospholipase B-like family. As to quaternary structure, interacts with IGF2R. In terms of processing, glycosylated; contains mannose 6-phosphate sugars.

It is found in the lysosome lumen. In terms of biological role, putative phospholipase. This is Putative phospholipase B-like 2 (Plbd2) from Rattus norvegicus (Rat).